Here is a 230-residue protein sequence, read N- to C-terminus: Octanoyltransferase (230 aa).

A BPL/LPL catalytic domain is found at 40-218; it reads PSLDDVLILL…CFAEVFGVEL (179 aa). Substrate is bound by residues 82–89, 149–151, and 162–164; these read RGGEVTYH, AIG, and GFA. C180 acts as the Acyl-thioester intermediate in catalysis.

Belongs to the LipB family.

It is found in the cytoplasm. The catalysed reaction is octanoyl-[ACP] + L-lysyl-[protein] = N(6)-octanoyl-L-lysyl-[protein] + holo-[ACP] + H(+). Its pathway is protein modification; protein lipoylation via endogenous pathway; protein N(6)-(lipoyl)lysine from octanoyl-[acyl-carrier-protein]: step 1/2. Catalyzes the transfer of endogenously produced octanoic acid from octanoyl-acyl-carrier-protein onto the lipoyl domains of lipoate-dependent enzymes. Lipoyl-ACP can also act as a substrate although octanoyl-ACP is likely to be the physiological substrate. The chain is Octanoyltransferase from Nostoc punctiforme (strain ATCC 29133 / PCC 73102).